An 88-amino-acid polypeptide reads, in one-letter code: Small ribosomal subunit protein uS15 (88 aa).

A compositionally biased stretch (polar residues) spans Met1 to Ala12. The disordered stretch occupies residues Met1–Ser23.

The protein belongs to the universal ribosomal protein uS15 family. Part of the 30S ribosomal subunit. Forms a bridge to the 50S subunit in the 70S ribosome, contacting the 23S rRNA.

Its function is as follows. One of the primary rRNA binding proteins, it binds directly to 16S rRNA where it helps nucleate assembly of the platform of the 30S subunit by binding and bridging several RNA helices of the 16S rRNA. In terms of biological role, forms an intersubunit bridge (bridge B4) with the 23S rRNA of the 50S subunit in the ribosome. This is Small ribosomal subunit protein uS15 from Psychrobacter sp. (strain PRwf-1).